We begin with the raw amino-acid sequence, 349 residues long: Phenylalanine--tRNA ligase alpha subunit (349 aa).

Glu258 provides a ligand contact to Mg(2+).

Belongs to the class-II aminoacyl-tRNA synthetase family. Phe-tRNA synthetase alpha subunit type 1 subfamily. In terms of assembly, tetramer of two alpha and two beta subunits. The cofactor is Mg(2+).

It localises to the cytoplasm. The enzyme catalyses tRNA(Phe) + L-phenylalanine + ATP = L-phenylalanyl-tRNA(Phe) + AMP + diphosphate + H(+). In Rickettsia felis (strain ATCC VR-1525 / URRWXCal2) (Rickettsia azadi), this protein is Phenylalanine--tRNA ligase alpha subunit.